Reading from the N-terminus, the 105-residue chain is Large ribosomal subunit protein uL24 (105 aa).

This sequence belongs to the universal ribosomal protein uL24 family. In terms of assembly, part of the 50S ribosomal subunit.

Functionally, one of two assembly initiator proteins, it binds directly to the 5'-end of the 23S rRNA, where it nucleates assembly of the 50S subunit. One of the proteins that surrounds the polypeptide exit tunnel on the outside of the subunit. The chain is Large ribosomal subunit protein uL24 from Cellvibrio japonicus (strain Ueda107) (Pseudomonas fluorescens subsp. cellulosa).